A 218-amino-acid chain; its full sequence is MPMTLGYWDIRGLAHAIRLLLEYTDSSYEEKRYTMGDAPDFDRSQWLNEKFKLGLDFPNLPYLIDGSHKITQSNAILRYLGRKHNLCGETEEERIRVDILENQLMDNRMVLARLCYNPDFEKLKPGYLEQLPGMMRLYSEFLGKRPWFAGDKITFVDFIAYDVLERNQVFEATCLDAFPNLKDFIARFEGLKKISDYMKSSRFLPRPLFTKMAIWGSK.

In terms of domain architecture, GST N-terminal spans 2-88 (PMTLGYWDIR…YLGRKHNLCG (87 aa)). Glutathione-binding positions include 7-8 (YW), 46-50 (WLNEK), 59-60 (NL), and 72-73 (QS). One can recognise a GST C-terminal domain in the interval 90–208 (TEEERIRVDI…KSSRFLPRPL (119 aa)). Tyr116 serves as a coordination point for substrate.

The protein belongs to the GST superfamily. Mu family. In terms of assembly, homodimer.

The protein resides in the cytoplasm. It catalyses the reaction RX + glutathione = an S-substituted glutathione + a halide anion + H(+). In terms of biological role, conjugation of reduced glutathione to a wide number of exogenous and endogenous hydrophobic electrophiles. The sequence is that of Glutathione S-transferase Mu 7 from Rattus norvegicus (Rat).